Here is a 286-residue protein sequence, read N- to C-terminus: Diaminopimelate epimerase (286 aa).

Residues Asn-22, Gln-56, and Asn-76 each coordinate substrate. Cys-85 functions as the Proton donor in the catalytic mechanism. Substrate-binding positions include 86–87 (GN), Asn-169, Asn-202, and 220–221 (ER). The Proton acceptor role is filled by Cys-229. 230 to 231 (GS) provides a ligand contact to substrate.

Belongs to the diaminopimelate epimerase family. Homodimer.

The protein localises to the cytoplasm. It catalyses the reaction (2S,6S)-2,6-diaminopimelate = meso-2,6-diaminopimelate. It functions in the pathway amino-acid biosynthesis; L-lysine biosynthesis via DAP pathway; DL-2,6-diaminopimelate from LL-2,6-diaminopimelate: step 1/1. Functionally, catalyzes the stereoinversion of LL-2,6-diaminopimelate (L,L-DAP) to meso-diaminopimelate (meso-DAP), a precursor of L-lysine and an essential component of the bacterial peptidoglycan. The protein is Diaminopimelate epimerase of Buchnera aphidicola subsp. Baizongia pistaciae (strain Bp).